Reading from the N-terminus, the 715-residue chain is Fatty acid oxidation complex subunit alpha (715 aa).

The tract at residues 1–190 (MTTTSAFMLN…KAGLVDDVVP (190 aa)) is enoyl-CoA hydratase. The 3-hydroxyacyl-CoA dehydrogenase stretch occupies residues 306–714 (GPLNSVGILG…FWTNGETDQG (409 aa)).

It in the N-terminal section; belongs to the enoyl-CoA hydratase/isomerase family. This sequence in the central section; belongs to the 3-hydroxyacyl-CoA dehydrogenase family. As to quaternary structure, heterotetramer of two alpha chains (FadJ) and two beta chains (FadI).

It is found in the cytoplasm. The catalysed reaction is a (3S)-3-hydroxyacyl-CoA = a (2E)-enoyl-CoA + H2O. The enzyme catalyses a 4-saturated-(3S)-3-hydroxyacyl-CoA = a (3E)-enoyl-CoA + H2O. It carries out the reaction a (3S)-3-hydroxyacyl-CoA + NAD(+) = a 3-oxoacyl-CoA + NADH + H(+). It catalyses the reaction (3S)-3-hydroxybutanoyl-CoA = (3R)-3-hydroxybutanoyl-CoA. It participates in lipid metabolism; fatty acid beta-oxidation. Its function is as follows. Catalyzes the formation of a hydroxyacyl-CoA by addition of water on enoyl-CoA. Also exhibits 3-hydroxyacyl-CoA epimerase and 3-hydroxyacyl-CoA dehydrogenase activities. In Salmonella typhimurium (strain LT2 / SGSC1412 / ATCC 700720), this protein is Fatty acid oxidation complex subunit alpha.